Reading from the N-terminus, the 105-residue chain is Large ribosomal subunit protein uL23 (105 aa).

Belongs to the universal ribosomal protein uL23 family. In terms of assembly, part of the 50S ribosomal subunit. Contacts protein L29, and trigger factor when it is bound to the ribosome.

In terms of biological role, one of the early assembly proteins it binds 23S rRNA. One of the proteins that surrounds the polypeptide exit tunnel on the outside of the ribosome. Forms the main docking site for trigger factor binding to the ribosome. The protein is Large ribosomal subunit protein uL23 of Chloroherpeton thalassium (strain ATCC 35110 / GB-78).